Consider the following 30-residue polypeptide: GVPCGESCVYIPCFTGIINCSCRDKVCYNN.

The segment at residues 1–30 (GVPCGESCVYIPCFTGIINCSCRDKVCYNN) is a cross-link (cyclopeptide (Gly-Asn)). Cystine bridges form between Cys-4–Cys-20, Cys-8–Cys-22, and Cys-13–Cys-27.

In terms of processing, this is a cyclic peptide. In terms of tissue distribution, detected in stems (at protein level).

Probably participates in a plant defense mechanism. Has cytotoxic activity against HUVEC cells (LC(50)= 2.17 uM) and various cancer cells including HeLa (LC(50)= 3.05 uM), MCF-7 and K562. Displays very weak hemolytic activity. Binds to and induces leakage in phospholipd membranes, particularly ones containing 1-palmitoyl-2-oleophosphatidylethanolamine (POPE). This Pigea enneasperma (Spade flower) protein is Cyclotide hyen-E.